The sequence spans 220 residues: UPF0319 protein YccT (220 aa).

Residues M1 to A20 form the signal peptide.

It belongs to the UPF0319 family.

In Salmonella heidelberg (strain SL476), this protein is UPF0319 protein YccT.